We begin with the raw amino-acid sequence, 147 residues long: Globin, polymeric component P3 (147 aa).

The 145-residue stretch at 2–146 (HLTADQVAAL…ISDALIAGLE (145 aa)) folds into the Globin domain. H96 serves as a coordination point for heme b.

This sequence belongs to the globin family. As to quaternary structure, polymer.

The polypeptide is Globin, polymeric component P3 (Glycera dibranchiata (Bloodworm)).